A 403-amino-acid chain; its full sequence is Cytochrome P450-SU2 (403 aa).

Residues 1–24 (MTTAERTAPPDALTVPASRAPGCP) are disordered. Cys352 is a heme binding site.

The protein belongs to the cytochrome P450 family. The cofactor is heme.

In terms of biological role, metabolism of a number of sulfonylurea herbicides. This is Cytochrome P450-SU2 (cyp105B1) from Streptomyces griseolus.